Consider the following 891-residue polypeptide: DNA mismatch repair protein MutS (891 aa).

632-639 contributes to the ATP binding site; sequence GPNMAGKS.

This sequence belongs to the DNA mismatch repair MutS family.

This protein is involved in the repair of mismatches in DNA. It is possible that it carries out the mismatch recognition step. This protein has a weak ATPase activity. The protein is DNA mismatch repair protein MutS of Rhodopirellula baltica (strain DSM 10527 / NCIMB 13988 / SH1).